A 147-amino-acid chain; its full sequence is Hemoglobin subunit epsilon (147 aa).

The region spanning 3–147 (HFTAEEKAII…VATALAHKYH (145 aa)) is the Globin domain. Phosphoserine occurs at positions 14 and 51. Residues histidine 64 and histidine 93 each coordinate heme b.

This sequence belongs to the globin family. As to quaternary structure, heterotetramer of two alpha chains and two epsilon chains in early embryonic hemoglobin Gower-2; two zeta chains and two epsilon chains in early embryonic hemoglobin Gower-1. In terms of tissue distribution, red blood cells.

The epsilon chain is a beta-type chain of early mammalian embryonic hemoglobin. In Otolemur crassicaudatus (Brown greater galago), this protein is Hemoglobin subunit epsilon (HBE1).